The sequence spans 232 residues: Small ribosomal subunit protein uS3 (232 aa).

The KH type-2 domain occupies 39 to 107; that stretch reads VRQYLTKALK…PAQINIAEVR (69 aa).

Belongs to the universal ribosomal protein uS3 family. In terms of assembly, part of the 30S ribosomal subunit. Forms a tight complex with proteins S10 and S14.

Functionally, binds the lower part of the 30S subunit head. Binds mRNA in the 70S ribosome, positioning it for translation. The protein is Small ribosomal subunit protein uS3 of Pseudoalteromonas atlantica (strain T6c / ATCC BAA-1087).